Reading from the N-terminus, the 539-residue chain is CTP synthase (539 aa).

The tract at residues 1 to 268 (MSFKCIFLTG…STFITEKLGL (268 aa)) is amidoligase domain. Ser-14 serves as a coordination point for CTP. A UTP-binding site is contributed by Ser-14. 15-20 (SLGKGL) is an ATP binding site. Residue Tyr-55 participates in L-glutamine binding. Asp-72 serves as a coordination point for ATP. Mg(2+) contacts are provided by Asp-72 and Glu-142. CTP-binding positions include 149–151 (DIE), 188–193 (KTKPTQ), and Lys-224. Residues 188-193 (KTKPTQ) and Lys-224 each bind UTP. The Glutamine amidotransferase type-1 domain occupies 294–533 (RIGLVGKYVQ…IQAAILYSRN (240 aa)). Residue Gly-353 participates in L-glutamine binding. The Nucleophile; for glutamine hydrolysis role is filled by Cys-380. L-glutamine-binding positions include 381 to 384 (LGMQ), Glu-404, and Arg-461. Residues His-506 and Glu-508 contribute to the active site.

This sequence belongs to the CTP synthase family. In terms of assembly, homotetramer.

It catalyses the reaction UTP + L-glutamine + ATP + H2O = CTP + L-glutamate + ADP + phosphate + 2 H(+). The enzyme catalyses L-glutamine + H2O = L-glutamate + NH4(+). It carries out the reaction UTP + NH4(+) + ATP = CTP + ADP + phosphate + 2 H(+). The protein operates within pyrimidine metabolism; CTP biosynthesis via de novo pathway; CTP from UDP: step 2/2. Its activity is regulated as follows. Allosterically activated by GTP, when glutamine is the substrate; GTP has no effect on the reaction when ammonia is the substrate. The allosteric effector GTP functions by stabilizing the protein conformation that binds the tetrahedral intermediate(s) formed during glutamine hydrolysis. Inhibited by the product CTP, via allosteric rather than competitive inhibition. Functionally, catalyzes the ATP-dependent amination of UTP to CTP with either L-glutamine or ammonia as the source of nitrogen. Regulates intracellular CTP levels through interactions with the four ribonucleotide triphosphates. The protein is CTP synthase of Chlamydia felis (strain Fe/C-56) (Chlamydophila felis).